Here is a 342-residue protein sequence, read N- to C-terminus: Protein-glutamate methylesterase/protein-glutamine glutaminase 1 (342 aa).

One can recognise a Response regulatory domain in the interval 2–119 (RVAIVNDMPL…GDPKAAAQRL (118 aa)). Position 53 is a 4-aspartylphosphate (D53). The CheB-type methylesterase domain occupies 146 to 329 (SDTDAALVVI…LPLGDIAPRL (184 aa)). Residues S158, H185, and D278 contribute to the active site.

This sequence belongs to the CheB family. Post-translationally, phosphorylated by CheA. Phosphorylation of the N-terminal regulatory domain activates the methylesterase activity.

Its subcellular location is the cytoplasm. It carries out the reaction [protein]-L-glutamate 5-O-methyl ester + H2O = L-glutamyl-[protein] + methanol + H(+). The catalysed reaction is L-glutaminyl-[protein] + H2O = L-glutamyl-[protein] + NH4(+). Involved in chemotaxis. Part of a chemotaxis signal transduction system that modulates chemotaxis in response to various stimuli. Catalyzes the demethylation of specific methylglutamate residues introduced into the chemoreceptors (methyl-accepting chemotaxis proteins or MCP) by CheR. Also mediates the irreversible deamidation of specific glutamine residues to glutamic acid. In Bordetella avium (strain 197N), this protein is Protein-glutamate methylesterase/protein-glutamine glutaminase 1.